A 1741-amino-acid polypeptide reads, in one-letter code: Meiosis regulator and mRNA stability factor 1 (1741 aa).

The 138-residue stretch at 345–482 (IGVFWDIENC…ALLHHAHELV (138 aa)) folds into the NYN domain. 3 disordered regions span residues 594–636 (KVKS…GSVI), 659–678 (TENH…SHAA), and 683–716 (LTTK…PVDK). The span at 659–668 (TENHQEHLRE) shows a compositional bias: basic and acidic residues. Positions 788–867 (ADIQISNIDY…KRIQVSLATG (80 aa)) constitute an RRM domain. HTH OST-type domains follow at residues 872–946 (SLSL…SPLG), 1000–1076 (SLKT…HNKP), 1097–1171 (QLIQ…LTHR), 1173–1248 (QVKR…IPKR), 1257–1332 (RTKQ…TEVE), 1333–1408 (QVKA…INRK), 1409–1483 (SLRT…VRLT), and 1484–1558 (NLYM…LKND). Residues 1684–1700 (KLTSGSVASSTAENTSV) show a composition bias toward polar residues. The segment at 1684 to 1727 (KLTSGSVASSTAENTSVPPRHSSETQLNKEAMDSPAKKQHKNKV) is disordered.

It localises to the peroxisome. Its function is as follows. Essential regulator of oogenesis required for female meiotic progression to repress transposable elements and preventing their mobilization, which is essential for the germline integrity. This Gallus gallus (Chicken) protein is Meiosis regulator and mRNA stability factor 1.